The chain runs to 223 residues: Small ribosomal subunit protein uS3 (223 aa).

A KH type-2 domain is found at 39–108 (IRNFVKKNSY…NILINIVEVK (70 aa)).

This sequence belongs to the universal ribosomal protein uS3 family. Part of the 30S ribosomal subunit. Forms a tight complex with proteins S10 and S14.

Its function is as follows. Binds the lower part of the 30S subunit head. Binds mRNA in the 70S ribosome, positioning it for translation. The polypeptide is Small ribosomal subunit protein uS3 (Clostridium botulinum (strain Hall / ATCC 3502 / NCTC 13319 / Type A)).